A 137-amino-acid polypeptide reads, in one-letter code: Small ribosomal subunit protein bS6 (137 aa).

A disordered region spans residues 96–137 (ITEASPMAKAKDERDTRRSSEERAPRAEATEEAEESAENTAE). A compositionally biased stretch (basic and acidic residues) spans 104–124 (KAKDERDTRRSSEERAPRAEA). Residues 125 to 137 (TEEAEESAENTAE) show a composition bias toward acidic residues.

Belongs to the bacterial ribosomal protein bS6 family.

In terms of biological role, binds together with bS18 to 16S ribosomal RNA. In Shewanella pealeana (strain ATCC 700345 / ANG-SQ1), this protein is Small ribosomal subunit protein bS6.